The sequence spans 293 residues: tRNA pseudouridine synthase B (293 aa).

Asp40 serves as the catalytic Nucleophile.

It belongs to the pseudouridine synthase TruB family. Type 1 subfamily.

It carries out the reaction uridine(55) in tRNA = pseudouridine(55) in tRNA. Responsible for synthesis of pseudouridine from uracil-55 in the psi GC loop of transfer RNAs. The sequence is that of tRNA pseudouridine synthase B from Mycolicibacterium paratuberculosis (strain ATCC BAA-968 / K-10) (Mycobacterium paratuberculosis).